A 355-amino-acid polypeptide reads, in one-letter code: tRNA uridine(34) hydroxylase (355 aa).

Residues Asp-146–Leu-240 form the Rhodanese domain. Residue Cys-200 is the Cysteine persulfide intermediate of the active site.

The protein belongs to the TrhO family.

It carries out the reaction uridine(34) in tRNA + AH2 + O2 = 5-hydroxyuridine(34) in tRNA + A + H2O. In terms of biological role, catalyzes oxygen-dependent 5-hydroxyuridine (ho5U) modification at position 34 in tRNAs. This chain is tRNA uridine(34) hydroxylase, found in Pectobacterium carotovorum subsp. carotovorum (strain PC1).